Here is a 767-residue protein sequence, read N- to C-terminus: MSLFNKVTKTFQWGQHTVTLETGEISRQAGGAVIVNIDDTVVLATVVGAKNAKPGQDFFPLTVDYIEKTYAAGKIPGSFFKREAKPSELEVLTSRLIDRPLRPLFPEGFYNEVHVVVHVLSLNPEASADIAALIGSSAALAISGIPFNGPVGAARVGYVNGEYVLNPGPTQLKSSKMDLVVAGTEAAVLMVESEADQLTEEVMLGAVVYGHEQAKVAIAAINELVRDAGKPAWDWQPPARNEPLIAKVAEFGLAKIEAAYQIRNKQARTHACRAAYAEVKISLAEAGVVFDNVDVDNLLFELEAKTVRGQILQGEPRIDGRDTRTVRPIEIRTGVLPRTHGSALFTRGETQALVVATLGTDQDSQRIDALAGDFRDSFLFHYNMPPFATGEVGRMGTTKRRETGHGRLAKRALVPLLPPKDEFGYTIRVVSEITESNGSSSMASVCGGCLAMMDAGVPMKAHVAGIAMGLIKEGNRFAVLTDILGDEDHLGDMDFKVAGTTAGVTALQMDIKIQGITKEIMQVALAQAKEARLHILGKMVEAMGTANTEVSNFAPRLYTMKINPEKIRDVIGKGGSVIRALTEETGCQIDIGEDGTITIASTDADKAELAKKRIADITAEAEIGKVYEGPVVKILDFGALINILPGKDGLLHISQIAHQRVEKVTDFLTEGQVVKVKVLETDEKGRIKLSMKALIERPEGMEFEERAPRREGGFGDRGDRGDRGPRRDRGGDRPERGERPARAEQPATEESGAPAAGQPQQQQGQQQ.

2 residues coordinate Mg(2+): aspartate 488 and aspartate 494. One can recognise a KH domain in the interval 555-614 (PRLYTMKINPEKIRDVIGKGGSVIRALTEETGCQIDIGEDGTITIASTDADKAELAKKRI). In terms of domain architecture, S1 motif spans 624 to 692 (GKVYEGPVVK…EKGRIKLSMK (69 aa)). Positions 700–742 (GMEFEERAPRREGGFGDRGDRGDRGPRRDRGGDRPERGERPAR) are enriched in basic and acidic residues. Residues 700 to 767 (GMEFEERAPR…QPQQQQGQQQ (68 aa)) are disordered. The span at 752–767 (GAPAAGQPQQQQGQQQ) shows a compositional bias: low complexity.

The protein belongs to the polyribonucleotide nucleotidyltransferase family. It depends on Mg(2+) as a cofactor.

It is found in the cytoplasm. The enzyme catalyses RNA(n+1) + phosphate = RNA(n) + a ribonucleoside 5'-diphosphate. In terms of biological role, involved in mRNA degradation. Catalyzes the phosphorolysis of single-stranded polyribonucleotides processively in the 3'- to 5'-direction. This chain is Polyribonucleotide nucleotidyltransferase, found in Leptothrix cholodnii (strain ATCC 51168 / LMG 8142 / SP-6) (Leptothrix discophora (strain SP-6)).